Here is a 472-residue protein sequence, read N- to C-terminus: NALCN channel auxiliary factor 2 (472 aa).

A helical transmembrane segment spans residues 47 to 67 (LASLLFFTVLLADHLWLCAGA). The tract at residues 77–114 (AMRPPWGAGRERQPVPPRAVLPLPPPPPGEPSAPPGTC) is disordered. Pro residues predominate over residues 90–110 (PVPPRAVLPLPPPPPGEPSAP). N120 and N193 each carry an N-linked (GlcNAc...) asparagine glycan. Residues 433–453 (LCVLVLMLLHTVVSFSSNQGG) form a helical membrane-spanning segment.

This sequence belongs to the NALF family.

The protein resides in the membrane. In terms of biological role, probable component of the NALCN channel complex, a channel that regulates the resting membrane potential and controls neuronal excitability. In Homo sapiens (Human), this protein is NALCN channel auxiliary factor 2.